The chain runs to 155 residues: Interleukin-2 (155 aa).

A signal peptide spans 1-20 (MYKMQLLSCIALMLVLVANS). The O-linked (GalNAc...) threonine glycan is linked to Thr24. Cysteines 79 and 127 form a disulfide. A glycan (N-linked (GlcNAc...) asparagine) is linked at Asn112.

Belongs to the IL-2 family.

It localises to the secreted. Cytokine produced by activated CD4-positive helper T-cells and to a lesser extend activated CD8-positive T-cells and natural killer (NK) cells that plays pivotal roles in the immune response and tolerance. Binds to a receptor complex composed of either the high-affinity trimeric IL-2R (IL2RA/CD25, IL2RB/CD122 and IL2RG/CD132) or the low-affinity dimeric IL-2R (IL2RB and IL2RG). Interaction with the receptor leads to oligomerization and conformation changes in the IL-2R subunits resulting in downstream signaling starting with phosphorylation of JAK1 and JAK3. In turn, JAK1 and JAK3 phosphorylate the receptor to form a docking site leading to the phosphorylation of several substrates including STAT5. This process leads to activation of several pathways including STAT, phosphoinositide-3-kinase/PI3K and mitogen-activated protein kinase/MAPK pathways. Functions as a T-cell growth factor and can increase NK-cell cytolytic activity as well. Promotes strong proliferation of activated B-cells and subsequently immunoglobulin production. Plays a pivotal role in regulating the adaptive immune system by controlling the survival and proliferation of regulatory T-cells, which are required for the maintenance of immune tolerance. Moreover, participates in the differentiation and homeostasis of effector T-cell subsets, including Th1, Th2, Th17 as well as memory CD8-positive T-cells. This chain is Interleukin-2 (IL2), found in Vulpes vulpes (Red fox).